The following is a 213-amino-acid chain: Dimethylamine corrinoid protein (213 aa).

Residues 1 to 90 form the B12-binding N-terminal domain; it reads MSKEELLQEL…LMPEGASGSK (90 aa). Positions 91-213 constitute a B12-binding domain; sequence LGVIVNGTVE…AVAKAKELLA (123 aa). A methylcob(III)alamin-binding site is contributed by His-104.

This sequence belongs to the methylamine corrinoid protein family. Copurifies with MtbA.

Its pathway is one-carbon metabolism; methanogenesis from dimethylamine. Functionally, acts as a methyl group carrier between MtbB1 and MtbA. Binds 1 corrinoid cofactor per protein, is subsequently demethylated by MtbA. This is Dimethylamine corrinoid protein from Methanosarcina barkeri.